Consider the following 544-residue polypeptide: GMP synthase [glutamine-hydrolyzing] (544 aa).

The 199-residue stretch at 12 to 210 (TILILDFGSQ…VKNVCSVRDG (199 aa)) folds into the Glutamine amidotransferase type-1 domain. Cysteine 88 acts as the Nucleophile in catalysis. Residues histidine 184 and glutamate 186 contribute to the active site. The GMPS ATP-PPase domain maps to 211-419 (WSMESFIPKE…LNIPEHLVGR (209 aa)). Residue 239–245 (SGGVDST) coordinates ATP. Residues arginine 312, aspartate 481, lysine 536, and glutamate 542 each coordinate XMP.

As to quaternary structure, homodimer. Also forms a small population of homotetramers. It depends on Mg(2+) as a cofactor.

Its subcellular location is the cytoplasm. The protein localises to the cytosol. The catalysed reaction is XMP + L-glutamine + ATP + H2O = GMP + L-glutamate + AMP + diphosphate + 2 H(+). It participates in purine metabolism; GMP biosynthesis; GMP from XMP (L-Gln route): step 1/1. In terms of biological role, catalyzes the conversion of xanthine monophosphate (XMP) to GMP in the presence of glutamine and ATP through an adenyl-XMP intermediate. This chain is GMP synthase [glutamine-hydrolyzing], found in Cryptococcus neoformans var. neoformans serotype D (strain JEC21 / ATCC MYA-565) (Filobasidiella neoformans).